Consider the following 74-residue polypeptide: Homeobox protein H40 (74 aa).

The segment at residues 8–67 is a DNA-binding region (homeobox); the sequence is ARRARTAFTYEQLVALENKFKTTRYLSVCERLNLALSLSLTETQVKIWFQNRRTKWKKQN.

The protein resides in the nucleus. The sequence is that of Homeobox protein H40 from Apis mellifera (Honeybee).